The primary structure comprises 117 residues: Large ribosomal subunit protein bL20 (117 aa).

This sequence belongs to the bacterial ribosomal protein bL20 family.

Functionally, binds directly to 23S ribosomal RNA and is necessary for the in vitro assembly process of the 50S ribosomal subunit. It is not involved in the protein synthesizing functions of that subunit. This Natranaerobius thermophilus (strain ATCC BAA-1301 / DSM 18059 / JW/NM-WN-LF) protein is Large ribosomal subunit protein bL20.